Here is a 347-residue protein sequence, read N- to C-terminus: Protein POOR HOMOLOGOUS SYNAPSIS 1 (347 aa).

It is found in the cytoplasm. In terms of biological role, required for accurate chromosome segregation in meiosis. Required for pairing to occur between homologous chromosomes. Acts in early recombination steps and ensures pairing fidelity and proper repair of meiotic DNA double-strand-breaks. Regulates recombination and pairing of homologous chromosomes during meiotic prophase by controlling transport of RAD50 from cytoplasm to the nucleus. May affect pairing of the gene-rich fraction of the genome rather than preventing pairing between repetitive DNA elements. This Zea mays (Maize) protein is Protein POOR HOMOLOGOUS SYNAPSIS 1.